The chain runs to 142 residues: MFSKTLSVSRLLMTRSFYSSTVVKNVSIFDFEKVYNLSKRPTGDKSTVLIDVREPDEFKQGAIETSYNLPVGKIEEAMKLSDEEFSKTYGFSKPVFEDNVVVYCRSGRRSTTASDILTKLGYKNIGNYTGSWLEWSDKIKSK.

A mitochondrion-targeting transit peptide spans 1 to 25 (MFSKTLSVSRLLMTRSFYSSTVVKN). Positions 43–140 (GDKSTVLIDV…SWLEWSDKIK (98 aa)) constitute a Rhodanese domain. Cys104 (cysteine persulfide intermediate) is an active-site residue.

The protein resides in the mitochondrion. The catalysed reaction is thiosulfate + hydrogen cyanide = thiocyanate + sulfite + 2 H(+). In terms of biological role, thiosulfate sulfurtransferase which catalyzes the transfer of sulfane sulfur from thiosulfate to cyanide. The chain is Putative thiosulfate sulfurtransferase, mitochondrial from Schizosaccharomyces pombe (strain 972 / ATCC 24843) (Fission yeast).